Consider the following 331-residue polypeptide: Putative NAD(P)H nitroreductase acg (331 aa).

Residues 28–32 (QPWRW) and arginine 316 each bind FMN.

Belongs to the nitroreductase family. FMN is required as a cofactor.

The protein is Putative NAD(P)H nitroreductase acg (acg) of Mycobacterium tuberculosis (strain CDC 1551 / Oshkosh).